Reading from the N-terminus, the 415-residue chain is MSGIIDASSALRKRKHLKRGITFTVMIVGQSGSGRSTFINTLCGQQVVDTSTTILLPTDTSTEIDLQLREETVELEDDEGVKIQLNIIDTPGFGDSLDNSPSFEIISDYIRHQYDEILLEESRVRRNPRFKDGRVHCCLYLINPTGHGLKEIDVEFIRQLGSLVNIIPVISKSDSLTRDELKLNKKLIMEDIDRWNLPIYNFPFDEDEISDEDYETNMYLRTLLPFAIIGSNEVYEMGGDVGTIRGRKYPWGILDVEDSSISDFVILRNALLISHLHDLKNYTHEILYERYRTEALSGESVAAESIRPNLTKLNGSSSSSTTTRRNTNPFKQSNNINNDVLNPASDMHGQSTGENNETYMTREEQIRLEEERLKAFEERVQQELLLKRQELLQREKELREIEARLEKEAKIKQEE.

Position 2 is an N-acetylserine (S2). A Phosphoserine modification is found at S2. Positions 12–19 match the Basic motif motif; the sequence is RKRKHLKR. Residues 19–298 form the Septin-type G domain; it reads RGITFTVMIV…ERYRTEALSG (280 aa). The interval 29-36 is G1 motif; sequence GQSGSGRS. GTP is bound by residues 29-36, G92, 172-180, G230, and R247; these read GQSGSGRS and KSDSLTRDE. Residues 89–92 form a G3 motif region; it reads DTPG. Positions 171–174 are G4 motif; it reads SKSD. The residue at position 305 (S305) is a Phosphoserine. Residues 307–360 form a disordered region; it reads RPNLTKLNGSSSSSTTTRRNTNPFKQSNNINNDVLNPASDMHGQSTGENNETYM. Low complexity predominate over residues 316-328; it reads SSSSSTTTRRNTN. Phosphothreonine is present on T327. Composition is skewed to polar residues over residues 329–340 and 348–359; these read PFKQSNNINNDV and HGQSTGENNETY. Residues 354-414 adopt a coiled-coil conformation; that stretch reads ENNETYMTRE…LEKEAKIKQE (61 aa). Residue K412 forms a Glycyl lysine isopeptide (Lys-Gly) (interchain with G-Cter in SUMO) linkage.

The protein belongs to the TRAFAC class TrmE-Era-EngA-EngB-Septin-like GTPase superfamily. Septin GTPase family. Component of the septin complex which consists of CDC3, CDC10, CDC11, CDC12 and probably SHS1 and rearranges to a cortical collar of highly ordered filaments at the mother-bud-neck. A complex formed by CDC3, CDC10, CDC11 and CDC12 is capable of forming long filaments in vitro and the components seem to be present in a 2:2:2:2 arrangement in vivo. The filaments are proposed to be formed by the end-to-end polymerization of CDC3-CDC12-CDC11 complexes with CDC10 serving as a bridge to bundle the polymers into paired filaments. Component of the GIN4 complex composed of at least BNI5, CDC3, CDC10, CDC11, CDC12, GIN4, NAP1 and SHS1. Self-associates. Interacts with BEM4, KCC4, SPR28 and SYP1. Interacts with BNI5. In terms of processing, sumoylated during mitosis on the mother cell side of the bud neck. Sumoylation probably plays a central role in regulating septin ring disassembly during the cell cycle.

Its subcellular location is the membrane. The protein resides in the bud neck. Its function is as follows. Septins are GTPases involved in cytokinesis that assemble early in the cell cycle as a patch at the incipient bud site and form a ring approximate 15 minutes before bud emergence, which transforms into an hour-glass shaped collar of cortical filaments that spans both sides of the mother-bud neck. This collar persists until just before cytokinesis, when it splits into two rings that occupy opposite sides of the neck. The septins at the bud neck serve as a structural scaffold that recruits different components involved in diverse processes at specific stages during the cell cycle. Many proteins bind asymmetrically to the septin collar. The septin assembly is regulated by protein kinases GIN4 and/or CLA4. May act by recruiting MYO1 and HOF1, a protein involved in septation, to the site of cleavage. Septins are also involved in cell morphogenesis, bud site selection, chitin deposition, cell cycle regulation, cell compartmentalization and spore wall formation. CDCd11 with SHS1 11 are involved in the recruitment of BNI5 and thereby ensure efficient localization at the bud neck of MYO1, the type II myosin of the actomyosin contractile ring. The chain is Cell division control protein 11 from Saccharomyces cerevisiae (strain ATCC 204508 / S288c) (Baker's yeast).